A 98-amino-acid polypeptide reads, in one-letter code: NADH-ubiquinone oxidoreductase chain 4L (98 aa).

A run of 3 helical transmembrane segments spans residues 2 to 22 (TLTT…TLIF), 29 to 49 (TLLC…ITAL), and 61 to 81 (ITTL…LTMV).

It belongs to the complex I subunit 4L family. As to quaternary structure, core subunit of respiratory chain NADH dehydrogenase (Complex I) which is composed of 45 different subunits.

It localises to the mitochondrion inner membrane. It catalyses the reaction a ubiquinone + NADH + 5 H(+)(in) = a ubiquinol + NAD(+) + 4 H(+)(out). In terms of biological role, core subunit of the mitochondrial membrane respiratory chain NADH dehydrogenase (Complex I) which catalyzes electron transfer from NADH through the respiratory chain, using ubiquinone as an electron acceptor. Part of the enzyme membrane arm which is embedded in the lipid bilayer and involved in proton translocation. The polypeptide is NADH-ubiquinone oxidoreductase chain 4L (MT-ND4L) (Oxymycterus rufus (Red hocicudo)).